The following is a 205-amino-acid chain: Disintegrin-like leberagin-C (205 aa).

One can recognise a Disintegrin domain in the interval 4–90 (PPVCGNELLE…DCPIDRFHRN (87 aa)). 9 disulfides stabilise this stretch: Cys-7/Cys-26, Cys-18/Cys-36, Cys-62/Cys-82, Cys-69/Cys-94, Cys-101/Cys-106, Cys-113/Cys-128, Cys-151/Cys-158, Cys-163/Cys-171, and Cys-193/Cys-198. The D/ECD-tripeptide motif lies at 68 to 70 (ECD). Asn-120 is a glycosylation site (N-linked (GlcNAc...) asparagine).

This sequence belongs to the venom metalloproteinase (M12B) family. P-III subfamily. P-IIIb sub-subfamily. As to quaternary structure, monomer. As to expression, expressed by the venom gland.

The protein resides in the secreted. In terms of biological role, inhibits platelet aggregation induced by thrombin and arachidonic acid with IC(50) of 40 and 50 nM respectively (in rabbit platetelet-rich plasma). It also inhibits the adhesion of melanoma tumor cells on fibrinogen and fibronectin, by interfering with the function of alpha-V/beta-3 (ITGAV/ITGB3) and, to a lesser extent, with alpha-V/beta-6 (ITGAV/ITGB6) and alpha-5/beta-1 (ITGA5/ITGB1) integrins. The protein is Disintegrin-like leberagin-C of Macrovipera lebetina transmediterranea (Blunt-nosed viper).